The chain runs to 242 residues: Small ribosomal subunit protein uS2 (242 aa).

It belongs to the universal ribosomal protein uS2 family.

The sequence is that of Small ribosomal subunit protein uS2 from Photobacterium profundum (strain SS9).